Reading from the N-terminus, the 267-residue chain is Hydroxyethylthiazole kinase 2 (267 aa).

Met41 serves as a coordination point for substrate. ATP contacts are provided by Lys116 and Thr166. Gly193 contributes to the substrate binding site.

It belongs to the Thz kinase family. It depends on Mg(2+) as a cofactor.

The catalysed reaction is 5-(2-hydroxyethyl)-4-methylthiazole + ATP = 4-methyl-5-(2-phosphooxyethyl)-thiazole + ADP + H(+). Its pathway is cofactor biosynthesis; thiamine diphosphate biosynthesis; 4-methyl-5-(2-phosphoethyl)-thiazole from 5-(2-hydroxyethyl)-4-methylthiazole: step 1/1. Catalyzes the phosphorylation of the hydroxyl group of 4-methyl-5-beta-hydroxyethylthiazole (THZ). The sequence is that of Hydroxyethylthiazole kinase 2 from Streptococcus pneumoniae (strain Taiwan19F-14).